The primary structure comprises 338 residues: Ketol-acid reductoisomerase (NADP(+)) (338 aa).

The KARI N-terminal Rossmann domain maps to 1–181 (MKVYYDKDAD…GGTKGGVIET (181 aa)). Residues 24–27 (YGSQ), arginine 47, and serine 52 each bind NADP(+). Histidine 107 is an active-site residue. Glycine 133 contributes to the NADP(+) binding site. The KARI C-terminal knotted domain occupies 182-327 (NFKEETETDL…GQLRDMMPWI (146 aa)). Mg(2+) is bound by residues aspartate 190, glutamate 194, glutamate 226, and glutamate 230. Serine 251 lines the substrate pocket.

This sequence belongs to the ketol-acid reductoisomerase family. Requires Mg(2+) as cofactor.

It catalyses the reaction (2R)-2,3-dihydroxy-3-methylbutanoate + NADP(+) = (2S)-2-acetolactate + NADPH + H(+). The enzyme catalyses (2R,3R)-2,3-dihydroxy-3-methylpentanoate + NADP(+) = (S)-2-ethyl-2-hydroxy-3-oxobutanoate + NADPH + H(+). It participates in amino-acid biosynthesis; L-isoleucine biosynthesis; L-isoleucine from 2-oxobutanoate: step 2/4. The protein operates within amino-acid biosynthesis; L-valine biosynthesis; L-valine from pyruvate: step 2/4. Functionally, involved in the biosynthesis of branched-chain amino acids (BCAA). Catalyzes an alkyl-migration followed by a ketol-acid reduction of (S)-2-acetolactate (S2AL) to yield (R)-2,3-dihydroxy-isovalerate. In the isomerase reaction, S2AL is rearranged via a Mg-dependent methyl migration to produce 3-hydroxy-3-methyl-2-ketobutyrate (HMKB). In the reductase reaction, this 2-ketoacid undergoes a metal-dependent reduction by NADPH to yield (R)-2,3-dihydroxy-isovalerate. The protein is Ketol-acid reductoisomerase (NADP(+)) of Azoarcus sp. (strain BH72).